The chain runs to 911 residues: Androgen receptor (911 aa).

The tract at residues 1–549 (MEVQLGLGRV…PIDYYFPPQK (549 aa)) is modulating. The interaction with ZNF318 stretch occupies residues 1 to 578 (MEVQLGLGRV…GSCKVFFKRA (578 aa)). Disordered regions lie at residues 35-164 (QNPG…LSLL) and 192-225 (QQQQ…YLGG). Residues 44–88 (AASAAPPGASLLLQQQQQQQQQQQQQQQQQQQQQQETSPRQQQQQ) show a composition bias toward low complexity. A Phosphoserine; by CDK9 modification is found at S81. The residue at position 93 (S93) is a Phosphoserine. The span at 192–214 (QQQQQEAVSEGSSSGRAREASGA) shows a compositional bias: low complexity. A compositionally biased stretch (polar residues) spans 215-225 (PTSSKDNYLGG). At Y222 the chain carries Phosphotyrosine; by CSK. Phosphoserine is present on S255. At Y266 the chain carries Phosphotyrosine; by CSK and TNK2. Phosphotyrosine; by CSK occurs at positions 306, 345, 356, and 361. Y362 bears the Phosphotyrosine; by CSK and TNK2 mark. K385 is covalently cross-linked (Glycyl lysine isopeptide (Lys-Gly) (interchain with G-Cter in SUMO)). Y392 is modified (phosphotyrosine; by CSK). Residue K512 forms a Glycyl lysine isopeptide (Lys-Gly) (interchain with G-Cter in SUMO) linkage. A phosphotyrosine; by CSK mark is found at Y526 and Y543. The interval 543 to 910 (YYFPPQKTCL…GKVKPIYFHT (368 aa)) is interaction with LPXN. 2 consecutive NR C4-type zinc fingers follow at residues 551–571 (CLIC…CGSC) and 587–611 (CASR…LRKC). Residues 551 to 623 (CLICGDEASG…AGMTLGARKL (73 aa)) constitute a DNA-binding region (nuclear receptor). The segment at 563–653 (YGALTCGSCK…TEETTQKLTV (91 aa)) is interaction with HIPK3. The interaction with CCAR1 stretch occupies residues 583–910 (QKYLCASRND…GKVKPIYFHT (328 aa)). Residues 616–910 (MTLGARKLKK…GKVKPIYFHT (295 aa)) are interaction with KAT7. Phosphoserine; by STK4/MST1 is present on S642. The 232-residue stretch at 660–891 (ECQPIFLNVL…DFPEMMAEII (232 aa)) folds into the NR LBD domain. 17beta-hydroxy-5alpha-androstan-3-one is bound by residues N697 and R744. Glycyl lysine isopeptide (Lys-Gly) (interchain with G-Cter in ubiquitin) cross-links involve residues K837 and K839. T869 is a binding site for 17beta-hydroxy-5alpha-androstan-3-one. At Y907 the chain carries Phosphotyrosine; by CSK.

This sequence belongs to the nuclear hormone receptor family. NR3 subfamily. Binds DNA as a homodimer. Part of a ternary complex containing AR, EFCAB6/DJBP and PARK7. Interacts with HIPK3 and NR0B2 in the presence of androgen. The ligand binding domain interacts with KAT7/HBO1 in the presence of dihydrotestosterone. Interacts with EFCAB6/DJBP, PQBP1, RANBP9, RBAK, SPDEF, SRA1, TGFB1I1 and RREB1. Interacts with ZMIZ1/ZIMP10 and ZMIZ2/ZMIP7 which both enhance its transactivation activity. Interacts with SLC30A9 and RAD54L2/ARIP4. Interacts with MACROD1 (via macro domain). Interacts via the ligand-binding domain with LXXLL and FXXLF motifs from NCOA1, NCOA2, NCOA3 and MAGEA11. Interacts (via nuclear receptor DNA binding domain and nuclear receptor ligand binding domain) with NCOA4. The AR N-terminal poly-Gln region binds Ran resulting in enhancement of AR-mediated transactivation. Ran-binding decreases as the poly-Gln length increases. Interacts with HIP1 (via coiled coil domain). Interacts (via ligand-binding domain) with TRIM68. Interacts with TNK2. Interacts with USP26. Interacts with RNF6. Interacts (regulated by RNF6 probably through polyubiquitination) with RNF14; regulates AR transcriptional activity. Interacts with PRMT2 and TRIM24. Interacts with RACK1. Interacts with RANBP10; this interaction enhances dihydrotestosterone-induced AR transcriptional activity. Interacts with PRPF6 in a hormone-independent way; this interaction enhances dihydrotestosterone-induced AR transcriptional activity. Interacts with STK4/MST1. Interacts with ZIPK/DAPK3. Interacts with LPXN. Interacts with MAK. Part of a complex containing AR, MAK and NCOA3. Interacts with CRY1. Interacts with CCAR1 and GATA2. Interacts with ZNF318. Interacts with BUD31. Interacts with ARID4A. Interacts with ARID4B. Interacts (via NR LBD domain) with ZBTB7A; the interaction is direct and androgen-dependent. Interacts with NCOR1. Interacts with NCOR2. Interacts with CRY2 in a ligand-dependent manner. Phosphorylated in prostate cancer cells in response to several growth factors including EGF. Phosphorylation is induced by c-Src kinase (CSK). Tyr-526 is one of the major phosphorylation sites and an increase in phosphorylation and Src kinase activity is associated with prostate cancer progression. Phosphorylation by TNK2 enhances the DNA-binding and transcriptional activity. Phosphorylation at Ser-81 by CDK9 regulates AR promoter selectivity and cell growth. In terms of processing, sumoylated on Lys-385 (major) and Lys-512. Ubiquitinated. Deubiquitinated by USP26. 'Lys-6' and 'Lys-27'-linked polyubiquitination by RNF6 modulates AR transcriptional activity and specificity. Post-translationally, palmitoylated by ZDHHC7 and ZDHHC21. Palmitoylation is required for plasma membrane targeting and for rapid intracellular signaling via ERK and AKT kinases and cAMP generation.

It is found in the nucleus. The protein resides in the cytoplasm. Steroid hormone receptors are ligand-activated transcription factors that regulate eukaryotic gene expression and affect cellular proliferation and differentiation in target tissues. Transcription factor activity is modulated by bound coactivator and corepressor proteins like ZBTB7A that recruits NCOR1 and NCOR2 to the androgen response elements/ARE on target genes, negatively regulating androgen receptor signaling and androgen-induced cell proliferation. Transcription activation is also down-regulated by NR0B2. Activated, but not phosphorylated, by HIPK3 and ZIPK/DAPK3. The chain is Androgen receptor (AR) from Pan troglodytes (Chimpanzee).